Here is a 123-residue protein sequence, read N- to C-terminus: Guanine nucleotide exchange factor MSS4 (123 aa).

Met-1 carries the N-acetylmethionine modification. Residues 9-123 form the MSS4 domain; that stretch reads ELVSAEGRNR…YVALERVSHE (115 aa). Residues Cys-23, Cys-26, Cys-94, and Cys-97 each contribute to the Zn(2+) site.

Belongs to the DSS4/MSS4 family. In terms of assembly, interacts with RAB8A. In terms of tissue distribution, ubiquitous.

Guanine-nucleotide-releasing protein that acts on members of the SEC4/YPT1/RAB subfamily. Stimulates GDP release from both YPT1, RAB3A and RAB10, but is less active on these proteins than on the SEC4 protein. Might play a general role in vesicular transport. This Rattus norvegicus (Rat) protein is Guanine nucleotide exchange factor MSS4 (Rabif).